The chain runs to 431 residues: tRNA (adenine(37)-N6)-methyltransferase (431 aa).

Residues 30 to 168 form the TsaA-like domain; sequence TEPIGYLESC…YIADYDSPQN (139 aa). Residues 47 to 49, 90 to 91, Arg117, Leu127, and 148 to 151 contribute to the S-adenosyl-L-methionine site; these read PRQ, HK, and IDGT. The segment at 196–242 is disordered; the sequence is LSGRGKVQPRQSTKERPKCLEDRTSGENSQKSRDMSEIQHTLPEDRE. Positions 207 to 242 are enriched in basic and acidic residues; that stretch reads STKERPKCLEDRTSGENSQKSRDMSEIQHTLPEDRE.

The protein belongs to the tRNA methyltransferase O family.

The enzyme catalyses N(6)-L-threonylcarbamoyladenosine(37) in tRNA + S-adenosyl-L-methionine = N(6)-methyl,N(6)-L-threonylcarbamoyladenosine(37) in tRNA + S-adenosyl-L-homocysteine + H(+). Its function is as follows. S-adenosyl-L-methionine-dependent methyltransferase responsible for the addition of the methyl group in the formation of N6-methyl-N6-threonylcarbamoyladenosine at position 37 (m(6)t(6)A37) of the tRNA anticodon loop of tRNA(Ser)(GCU). The methyl group of m(6)t(6)A37 may improve the efficiency of the tRNA decoding ability. May bind to tRNA. In Mus musculus (Mouse), this protein is tRNA (adenine(37)-N6)-methyltransferase.